A 737-amino-acid polypeptide reads, in one-letter code: Aryl hydrocarbon receptor nuclear translocator 2 (737 aa).

Residues 1–73 (MATPAAVNPS…SRYDDDQIPG (73 aa)) are disordered. A compositionally biased stretch (basic and acidic residues) spans 64–73 (SRYDDDQIPG). The bHLH domain maps to 78-131 (YARENHSEIERRRRNKMTQYITELSDMVPTCSALARKPDKLTILRMAVSHMKSM). PAS domains are found at residues 149–221 (TEQE…ENSM) and 340–406 (SMDM…QVVK). In terms of domain architecture, PAC spans 413-456 (SVMYRFRMKNREWMLIRTSSFTFQNPYSDEIEYIICTNTNVKQL). Disordered regions lie at residues 525–556 (MMVP…FSSS) and 588–721 (QVSW…TTNY). Composition is skewed to polar residues over residues 528-543 (PSST…QGSP) and 588-626 (QVSW…YQAD). Low complexity predominate over residues 627-642 (PSSYSPLSSPATSSPS). Polar residues predominate over residues 643-656 (GNAYSNLANRNTAF). The segment covering 659-688 (SGESSQSGGQFQGRPSEVWSQWQSQHHSQQ) has biased composition (low complexity).

In terms of assembly, efficient DNA binding requires dimerization with another bHLH protein. Heterodimer with the aryl hydrocarbon receptor (AHR), SIM1 or HIF2A/EPAS-1. In terms of tissue distribution, isoform 1 and isoform 2 are most highly expressed in the brain, eye and skeletal muscle and to a lower degree in liver, heart, kidney and swim bladder. Isoform 3 is most highly expressed in the eye, forebrain, midbrain, hindbrain, skeletal muscle, gills and brain but is barely detectable in liver, heart, kidney and swim bladder. Before the pharyngula period isoform 3 is expressed throughout the entire embryo and during this period extensively in the brain and eye.

The protein resides in the nucleus. In terms of biological role, transcription factor that plays a role in the development of the hypothalamo-pituitary axis. Specifically recognizes the xenobiotic response element (XRE). Isoform 1 acts as a transcriptional activator. Isoform 3 acts as a transcriptional repressor. This Danio rerio (Zebrafish) protein is Aryl hydrocarbon receptor nuclear translocator 2.